Reading from the N-terminus, the 819-residue chain is Capsid-associated protein Vp91 (819 aa).

Positions 1–18 (MSDVVLLVLAIILITIFT) are cleaved as a signal peptide. The segment at 147–196 (CVPVDPCAGRAPGRYPMDERLLDTLVHNQPSDKDYSAGEHLHHPTLYLRC) adopts a C2HC BV-type zinc-finger fold. 2 disulfides stabilise this stretch: C207/C220 and C260/C273. An N-linked (GlcNAc...) asparagine; by host glycan is attached at N210. The 59-residue stretch at 223–281 (NELCEGRPDGFVLAYFPETLRVNEFVECRGGKHVVARCPDQQVFDRALMTCVQTHPCAF) folds into the Chitin-binding type-2 domain. N588 and N609 each carry an N-linked (GlcNAc...) asparagine; by host glycan. Positions 650–671 (GDGDHWAPEAPPTQPEAPPAPE) are disordered. Positions 658-671 (EAPPTQPEAPPAPE) are enriched in pro residues. N752 is a glycosylation site (N-linked (GlcNAc...) asparagine; by host).

Its subcellular location is the virion. Its function is as follows. Probable capsid-associated protein. In Orgyia pseudotsugata (Douglas-fir tussock moth), this protein is Capsid-associated protein Vp91 (p91).